Reading from the N-terminus, the 1357-residue chain is DNA-directed RNA polymerase subunit beta (1357 aa).

This sequence belongs to the RNA polymerase beta chain family. As to quaternary structure, the RNAP catalytic core consists of 2 alpha, 1 beta, 1 beta' and 1 omega subunit. When a sigma factor is associated with the core the holoenzyme is formed, which can initiate transcription.

It catalyses the reaction RNA(n) + a ribonucleoside 5'-triphosphate = RNA(n+1) + diphosphate. Its function is as follows. DNA-dependent RNA polymerase catalyzes the transcription of DNA into RNA using the four ribonucleoside triphosphates as substrates. This Pseudomonas putida (strain GB-1) protein is DNA-directed RNA polymerase subunit beta.